Reading from the N-terminus, the 414-residue chain is Serine hydroxymethyltransferase (414 aa).

(6S)-5,6,7,8-tetrahydrofolate-binding positions include Leu-121 and 125–127; that span reads GHL. Lys-229 is subject to N6-(pyridoxal phosphate)lysine.

Belongs to the SHMT family. As to quaternary structure, homodimer. Pyridoxal 5'-phosphate serves as cofactor.

Its subcellular location is the cytoplasm. It carries out the reaction (6R)-5,10-methylene-5,6,7,8-tetrahydrofolate + glycine + H2O = (6S)-5,6,7,8-tetrahydrofolate + L-serine. It participates in one-carbon metabolism; tetrahydrofolate interconversion. Its pathway is amino-acid biosynthesis; glycine biosynthesis; glycine from L-serine: step 1/1. Its function is as follows. Catalyzes the reversible interconversion of serine and glycine with tetrahydrofolate (THF) serving as the one-carbon carrier. This reaction serves as the major source of one-carbon groups required for the biosynthesis of purines, thymidylate, methionine, and other important biomolecules. Also exhibits THF-independent aldolase activity toward beta-hydroxyamino acids, producing glycine and aldehydes, via a retro-aldol mechanism. This Thiobacillus denitrificans (strain ATCC 25259 / T1) protein is Serine hydroxymethyltransferase.